Reading from the N-terminus, the 369-residue chain is Phenylalanine--tRNA ligase alpha subunit (369 aa).

A Mg(2+)-binding site is contributed by Glu-269.

The protein belongs to the class-II aminoacyl-tRNA synthetase family. Phe-tRNA synthetase alpha subunit type 1 subfamily. Tetramer of two alpha and two beta subunits. Mg(2+) serves as cofactor.

It localises to the cytoplasm. The enzyme catalyses tRNA(Phe) + L-phenylalanine + ATP = L-phenylalanyl-tRNA(Phe) + AMP + diphosphate + H(+). The sequence is that of Phenylalanine--tRNA ligase alpha subunit from Brucella anthropi (strain ATCC 49188 / DSM 6882 / CCUG 24695 / JCM 21032 / LMG 3331 / NBRC 15819 / NCTC 12168 / Alc 37) (Ochrobactrum anthropi).